Here is a 267-residue protein sequence, read N- to C-terminus: MEKDDEVKKRDRMKVKLKVENLTKIFEFNGNRVKALDNINLEVYENEFLTVMGPSGCGKTTLLRIIAGLDYPTEGKVLLDGKEVKGPGADRGVVFQQYTLMPWRTVLKNVTFGLELKGIPKNERIEIAKKFIKMVGLEGFEDAYPYQLSGGMQQRVAIARTLANDPEIVLMDEPFAALDAQTRNILQNELLKIWQKEKKTVFFVTHSVDEAVYLSDRVVVLTARPGRIKEIVKIDLERPRDRTSIEFLEYRKKILNILKDEVLKSLK.

The region spanning 17 to 248 (LKVENLTKIF…PRDRTSIEFL (232 aa)) is the ABC transporter domain. Position 53–60 (53–60 (GPSGCGKT)) interacts with ATP.

This sequence belongs to the ABC transporter superfamily.

This is an uncharacterized protein from Methanocaldococcus jannaschii (strain ATCC 43067 / DSM 2661 / JAL-1 / JCM 10045 / NBRC 100440) (Methanococcus jannaschii).